A 279-amino-acid chain; its full sequence is Acetylglutamate kinase (279 aa).

Substrate-binding positions include Gly64–Gly65, Arg86, and Asn177.

The protein belongs to the acetylglutamate kinase family. ArgB subfamily.

The protein resides in the cytoplasm. The catalysed reaction is N-acetyl-L-glutamate + ATP = N-acetyl-L-glutamyl 5-phosphate + ADP. It functions in the pathway amino-acid biosynthesis; L-arginine biosynthesis; N(2)-acetyl-L-ornithine from L-glutamate: step 2/4. Its function is as follows. Catalyzes the ATP-dependent phosphorylation of N-acetyl-L-glutamate. The sequence is that of Acetylglutamate kinase from Campylobacter jejuni (strain RM1221).